Consider the following 78-residue polypeptide: Omega-conotoxin-like 2 (78 aa).

The signal sequence occupies residues 1 to 22; the sequence is MKLTCVVIVAVLLLTACQLITA. A propeptide spanning residues 23–42 is cleaved from the precursor; it reads DDSRGTQKHRSLRSTTKVSK. 3 cysteine pairs are disulfide-bonded: C46/C62, C53/C65, and C61/C72.

This sequence belongs to the conotoxin O1 superfamily. As to expression, expressed by the venom duct.

It is found in the secreted. Functionally, omega-conotoxins act at presynaptic membranes, they bind and block voltage-gated calcium channels (Cav). This is Omega-conotoxin-like 2 from Conus striatus (Striated cone).